The chain runs to 581 residues: MGTSSCGDHEKQRIEDEEQYGVLLYYKYTSVPDLDELVSFYESSCNSLGLLGRVRLSPKGVNVTVGGKLTALEEHIAAAKSNCLFEGTDFKLASCHHPLNDKVAEECGFTSLSIRVVEELVTFSPCPPLKPPEISNAGKHLSAAEFHSVLQSANGKSENKELVLLDARNLYETRIGKFESENVETLDPEIRQYSDLPTWIDQNAEKMKGKNVLMYCTGGIRCEMASAYIRSKGAGFENTFQLYGGIQRYLEQFPSGGFFKGKNFVFDHRISVGSSKEDIIGSCLLCNNTFDDYSPRCRCRLCRMLVLVCNHCRVKGDIYICELCRKHGKGEVPLSLDPLNQPSESNGDNTRRKLRILCLHGFRQNASSFKGRTGSLAKKLKNIAELVFIDAPHELQFIYQTATPPSGVCNKKFAWLVSSDFDKPSETGWTVAQCQFDPLQYQTQTEGFDKSLTYLKTAFEEKGPFDGILGFSQGAAMAAAVCGKQEQLVGEIDFRFCVLCSGFTPWPLLEMKEKRSIKCPSLHIFGSQPGKDRQIVTQASSDLAGLFEDGCATIVEHDFGHIIPTKSPYIDEIKAFLYQFI.

The Rhodanese domain maps to 158–258 (ENKELVLLDA…YLEQFPSGGF (101 aa)). Residue Cys216 is the Cysteine persulfide intermediate of the active site.

The polypeptide is Rhodanese-like domain-containing protein 6 (STR6) (Arabidopsis thaliana (Mouse-ear cress)).